Consider the following 507-residue polypeptide: tRNA (guanine(10)-N(2))-methyltransferase TRMT11 (507 aa).

Residues 459 to 475 are compositionally biased toward basic and acidic residues; that stretch reads EKTKKKEQKKKSVENHL. Residues 459–507 form a disordered region; the sequence is EKTKKKEQKKKSVENHLKSKNNNDVINNNSNDTNSNNNCNNENNIENQK. Positions 480–507 are enriched in low complexity; the sequence is NNDVINNNSNDTNSNNNCNNENNIENQK.

Belongs to the class I-like SAM-binding methyltransferase superfamily. TRM11 methyltransferase family. In terms of assembly, part of the heterodimeric TRMT11-TRM112 methyltransferase complex; this complex forms an active tRNA methyltransferase, where TRMT112 acts as an activator of the catalytic subunit TRMT11.

The protein resides in the cytoplasm. It carries out the reaction guanosine(10) in tRNA + S-adenosyl-L-methionine = N(2)-methylguanosine(10) in tRNA + S-adenosyl-L-homocysteine + H(+). Functionally, catalytic subunit of the TRMT11-TRM112 methyltransferase complex, that specifically mediates the S-adenosyl-L-methionine-dependent N(2)-methylation of guanosine nucleotide at position 10 (m2G10) in tRNAs. This is one of the major tRNA (guanine-N(2))-methyltransferases. This is tRNA (guanine(10)-N(2))-methyltransferase TRMT11 (trmt11) from Dictyostelium discoideum (Social amoeba).